The sequence spans 38 residues: Large ribosomal subunit protein bL36 (38 aa).

It belongs to the bacterial ribosomal protein bL36 family.

In Synechocystis sp. (strain ATCC 27184 / PCC 6803 / Kazusa), this protein is Large ribosomal subunit protein bL36.